Here is a 467-residue protein sequence, read N- to C-terminus: 5'-nucleotidase domain-containing protein 1 (467 aa).

Residue Asp-16 is the Nucleophile of the active site. The Mg(2+) site is built by Asp-16 and Asp-18. Asp-18 (proton donor) is an active-site residue. Lys-181 carries the N6-acetyllysine modification. Residue Asp-323 participates in Mg(2+) binding.

Belongs to the 5'(3')-deoxyribonucleotidase family.

The chain is 5'-nucleotidase domain-containing protein 1 (Nt5dc1) from Mus musculus (Mouse).